The sequence spans 76 residues: Conotoxin Cal5a L2 (76 aa).

Residues 1–22 (MRFYIGLMAALMLTSILRTDSA) form the signal peptide. The propeptide occupies 23–42 (SVGQTGTKSELALIERVIRQ). At proline 50 the chain carries 4-hydroxyproline. Proline 58, proline 62, and proline 64 each carry 4-hydroxyproline; partial.

Belongs to the conotoxin T superfamily. Post-translationally, contains 2 disulfide bonds that can be either 'C1-C3, C2-C4' or 'C1-C4, C2-C3', since these disulfide connectivities have been observed for conotoxins with cysteine framework V (for examples, see AC P0DQQ7 and AC P81755). Expressed by the venom duct.

The protein localises to the secreted. Functionally, probable neurotoxin with unknown target. Possibly targets ion channels. This is Conotoxin Cal5a L2 from Californiconus californicus (California cone).